The primary structure comprises 1135 residues: MGIWKWLVMASLVWPVLTLRNVYDMKIECPHTVSFGENSVIGYVELPPVPLADTAQMVPESSCNMDNHQSLNTITKYTQVSWRGKADQSQSSQNSFETVSTEVDLKGTCVLKHKMVEESYRSRKSVTCYDLSCNSTYCKPTLYMIVPIHACNMMKSCLIALGPYRVQVVYERSYCMTGVLIEGKCFVPDQSVVSIIKHGIFDIASVHIVCFFVAVKGNTYKIFEQVKKSFESTCNDTENKVQGYYICIVGGNSAPIYVPTLDDFRSMEAFTGIFRSPHGEDHDLAGEEIASYSIVGPANAKVPHSASSDTLSLIAYSGIPSYSSLSILTSSTEAKHVFSPGLFPKLNHTNCDKSAIPLIWTGMIDLPGYYEAVHPCTVFCVLSGPGASCEAFSEGGIFNITSPMCLVSKQNRFRLTEQQVNFVCQRVDMDIVVYCNGQRKVILTKTLVIGQCIYTITSLFSLLPGVAHSIAVELCVPGFHGWATAALLVTFCFGWVLIPAITFIILTVLKFIANIFHTSNQENRLKSVLRKIKEEFEKTKGSMVCDVCKYECETYKELKAHGVSCPQSQCPYCFTHCEPTEAAFQAHYKVCQVTHRFRDDLKKTVTPQNFTPGCYRTLNLFRYKSRCYIFTMWIFLLVLESILWAASASETPLTPVWNDNAHGVGSVPMHTDLELDFSLTSSSKYTYRRKLTNPLEEAQSIDLHIEIEEQTIGVDVHALGHWFDGRLNLKTSFHCYGACTKYEYPWHTAKCHYERDYQYETSWGCNPSDCPGVGTGCTACGLYLDQLKPVGSAYKIITIRYSRRVCVQFGEENLCKIIDMNDCFVSRHVKVCIIGTVSKFSQGDTLLFFGPLEGGGLIFKHWCTSTCQFGDPGDIMSPRDKGFLCPEFPGSFRKKCNFATTPICEYDGNMVSGYKKVMATIDSFQSFNTSTMHFTDERIEWKDPDGMLRDHINILVTKDIDFDNLGENPCKIGLQTSSIEGAWGSGVGFTLTCLVSLTECPTFLTSIKACDKAICYGAESVTLTRGQNTVKVSGKGGHSGSTFRCCHGEDCSQIGLHAAAPHLDKVNGISEIENSKVYDDGAPQCGIKCWFVKSGEWISGIFSGNWIVLIVLCVFLLFSLVLLSILCPVRKHKKS.

Positions 1–18 (MGIWKWLVMASLVWPVLT) are cleaved as a signal peptide. Topologically, residues 19–485 (LRNVYDMKIE…VPGFHGWATA (467 aa)) are lumenal. 11 disulfides stabilise this stretch: Cys-29–Cys-151, Cys-63–Cys-157, Cys-109–Cys-128, Cys-133–Cys-138, Cys-175–Cys-185, Cys-210–Cys-247, Cys-234–Cys-351, Cys-376–Cys-435, Cys-380–Cys-389, Cys-405–Cys-424, and Cys-452–Cys-475. An N-linked (GlcNAc...) asparagine; by host glycan is attached at Asn-134. 2 N-linked (GlcNAc...) asparagine; by host glycosylation sites follow: Asn-235 and Asn-347. An N-linked (GlcNAc...) asparagine; by host glycan is attached at Asn-399. A helical membrane pass occupies residues 486 to 506 (ALLVTFCFGWVLIPAITFIIL). At 507-627 (TVLKFIANIF…LNLFRYKSRC (121 aa)) the chain is on the cytoplasmic side. Residues 516–533 (FHTSNQENRLKSVLRKIK) are binding to the ribonucleoprotein. 2 consecutive CCHC-type zinc fingers follow at residues 545 to 565 (CDVC…GVSC) and 570 to 591 (CPYC…YKVC). Binding to the ribonucleoprotein stretches follow at residues 588–605 (YKVC…KKTV), 592–603 (QVTHRFRDDLKK), and 611–625 (TPGC…RYKS). Residues 611 to 634 (TPGCYRTLNLFRYKSRCYIFTMWI) enclose the ITAM domain. The YxxL motif lies at 615-618 (YRTL). The helical transmembrane segment at 628 to 648 (YIFTMWIFLLVLESILWAASA) threads the bilayer. The Lumenal portion of the chain corresponds to 649-1105 (SETPLTPVWN…EWISGIFSGN (457 aa)). Disulfide bonds link Cys-735–Cys-770, Cys-739–Cys-777, Cys-751–Cys-885, Cys-765–Cys-896, Cys-780–Cys-904, Cys-806–Cys-815, Cys-823–Cys-832, and Cys-863–Cys-867. The tract at residues 757-777 (YQYETSWGCNPSDCPGVGTGC) is fusion loop. Residue Asn-928 is glycosylated (N-linked (GlcNAc...) asparagine; by host). 5 disulfides stabilise this stretch: Cys-970/Cys-1000, Cys-993/Cys-1045, Cys-1010/Cys-1015, Cys-1046/Cys-1051, and Cys-1085/Cys-1089. The chain crosses the membrane as a helical span at residues 1106 to 1126 (WIVLIVLCVFLLFSLVLLSIL). The tract at residues 1122-1135 (LLSILCPVRKHKKS) is binding to the ribonucleoprotein. The Cytoplasmic segment spans residues 1127–1135 (CPVRKHKKS).

The protein belongs to the hantavirus envelope glycoprotein family. Homodimer. Homotetramer; forms heterotetrameric Gn-Gc spikes in the pre-fusion conformation. Interacts (via C-terminus) with the nucleoprotein. Interacts with host TUFM; this interaction contributes to the virus-induced degradation of mitochondria by autophagy, which leads to degradation of host MAVS and inhibition of type I interferon (IFN) responses. Interacts with host MAP1LC3B; this interaction contributes to the virus-induced degradation of mitochondria by autophagy, which leads to degradation of host MAVS and inhibition of type I interferon (IFN) responses. As to quaternary structure, homotetramer; forms heterotetrameric Gn-Gc spikes in the pre-fusion conformation. Homotrimer; forms homotrimer in the post-fusion conformation at acidic pH. Interacts (via C-terminus) with the nucleoprotein. In terms of processing, specific enzymatic cleavage in vivo yield the mature proteins Glycoprotein N and Glycoprotein C.

It localises to the virion membrane. It is found in the host cell surface. The protein localises to the host Golgi apparatus membrane. The protein resides in the host endoplasmic reticulum membrane. Its subcellular location is the host mitochondrion. Its function is as follows. Forms homotetramers with glycoprotein C at the surface of the virion. Attaches the virion to host cell receptors including integrin ITGAV/ITGB3. This attachment induces virion internalization predominantly through clathrin-dependent endocytosis. May also bind to host C1QBP for virus entry into the host cell. Mediates the assembly and budding of infectious virus particles through its interaction with the nucleocapsid protein and the viral genome. May dysregulate normal immune and endothelial cell responses through an ITAM motif. Translocates to mitochondria, binds to host TUFM and recruits MAP1LC3B. These interactions induce mitochondrial autophagy and therefore destruction of host MAVS leading to inhibition of type I interferon (IFN) responses. Concomitant breakdown of glycoprotein N is apparently prevented by the nucleoprotein that may inhibit Gn-stimulated autophagosome-lysosome fusion. Interacts with the viral genomic RNA. Functionally, homodimer. Homotetramer; forms heterotetrameric Gn-Gc spikes in the pre-fusion conformation. Attaches the virion to host cell receptors including integrin ITGAV/ITGB3. This attachment induces virion internalization predominantly through clathrin-dependent endocytosis. May also bind to host C1QBP for virus entry into the host cell. Class II fusion protein that promotes fusion of viral membrane with host endosomal membrane after endocytosis of the virion. The protein is Envelopment polyprotein (GP) of Apodemus agrarius (Eurasian field mouse).